The primary structure comprises 205 residues: Urease accessory protein UreE (205 aa).

Positions 171–205 (AHEAHPHAHSHAGGHGHVHSGHGHGGKHGEHDAES) are disordered. Residues 177–196 (HAHSHAGGHGHVHSGHGHGG) are compositionally biased toward basic residues.

The protein belongs to the UreE family.

It is found in the cytoplasm. Functionally, involved in urease metallocenter assembly. Binds nickel. Probably functions as a nickel donor during metallocenter assembly. This is Urease accessory protein UreE from Bordetella bronchiseptica (strain ATCC BAA-588 / NCTC 13252 / RB50) (Alcaligenes bronchisepticus).